Consider the following 208-residue polypeptide: Protein GrpE (208 aa).

Positions 1-12 are enriched in basic and acidic residues; the sequence is MTNKDESVKKNT. The segment at 1 to 51 is disordered; sequence MTNKDESVKKNTESTVEETNVKQNIDDSVEQAEESKGHLQDEAIEETSDEN. Positions 13–23 are enriched in polar residues; the sequence is ESTVEETNVKQ. The segment covering 42 to 51 has biased composition (acidic residues); that stretch reads EAIEETSDEN.

Belongs to the GrpE family. In terms of assembly, homodimer.

It is found in the cytoplasm. Its function is as follows. Participates actively in the response to hyperosmotic and heat shock by preventing the aggregation of stress-denatured proteins, in association with DnaK and GrpE. It is the nucleotide exchange factor for DnaK and may function as a thermosensor. Unfolded proteins bind initially to DnaJ; upon interaction with the DnaJ-bound protein, DnaK hydrolyzes its bound ATP, resulting in the formation of a stable complex. GrpE releases ADP from DnaK; ATP binding to DnaK triggers the release of the substrate protein, thus completing the reaction cycle. Several rounds of ATP-dependent interactions between DnaJ, DnaK and GrpE are required for fully efficient folding. This Staphylococcus aureus (strain COL) protein is Protein GrpE.